Consider the following 559-residue polypeptide: NAD(P)H-quinone oxidoreductase chain 4-2 (559 aa).

14 helical membrane-spanning segments follow: residues 5-25 (FPWL…IPLI), 35-55 (WYAL…FWTN), 86-106 (ISMP…FAAW), 114-134 (LFYF…VAQD), 136-156 (LLLF…VCIW), 168-188 (FLLY…GLAF), 207-227 (IALE…KLAI), 242-262 (SAPV…YGLI), 274-294 (VYFA…GGFS), 310-330 (VSHM…GISG), 331-351 (AMLQ…LAGV), 374-394 (VFAL…MSGF), 417-437 (VTVF…LSML), and 488-508 (VFIA…PKLA).

This sequence belongs to the complex I subunit 4 family.

Its subcellular location is the cellular thylakoid membrane. The enzyme catalyses a plastoquinone + NADH + (n+1) H(+)(in) = a plastoquinol + NAD(+) + n H(+)(out). The catalysed reaction is a plastoquinone + NADPH + (n+1) H(+)(in) = a plastoquinol + NADP(+) + n H(+)(out). Its function is as follows. NDH-1 shuttles electrons from NAD(P)H, via FMN and iron-sulfur (Fe-S) centers, to quinones in the respiratory chain. The immediate electron acceptor for the enzyme in this species is believed to be plastoquinone. Couples the redox reaction to proton translocation (for every two electrons transferred, four hydrogen ions are translocated across the cytoplasmic membrane), and thus conserves the redox energy in a proton gradient. The chain is NAD(P)H-quinone oxidoreductase chain 4-2 (ndhD2) from Synechocystis sp. (strain ATCC 27184 / PCC 6803 / Kazusa).